The following is a 557-amino-acid chain: T-complex protein 1 subunit theta-like 2 (557 aa).

Disordered stretches follow at residues 1–33 (MDST…EPHL) and 531–557 (EIWN…GLNN).

Belongs to the TCP-1 chaperonin family.

Its subcellular location is the cytoplasm. In terms of biological role, possible molecular chaperone; assists the folding of proteins upon ATP hydrolysis. This Homo sapiens (Human) protein is T-complex protein 1 subunit theta-like 2 (CCT8L2).